A 182-amino-acid chain; its full sequence is Inner membrane assembly complex subunit 17 (182 aa).

The transit peptide at 1-45 (MLKRRSNALITLSRTKLFPITTVAYYHRRLLNQQRRAVSTSPKKE) directs the protein to the mitochondrion. The Mitochondrial matrix segment spans residues 46–107 (IKSLEDLANL…EIPVKRFIRP (62 aa)). The helical transmembrane segment at 108 to 127 (LWMFILMGSSVYLLLHFSWW) threads the bilayer. Residues 128–158 (KLEHEERESQLKKEVEILEHQLNELIVQDKT) adopt a coiled-coil conformation. Over 128–182 (KLEHEERESQLKKEVEILEHQLNELIVQDKTHNTSRGKGSNESTHMKPWYRRWFW) the chain is Mitochondrial intermembrane.

Belongs to the INA17 family. As to quaternary structure, component of the inner membrane assembly (INA) complex, composed of INA17 and INA22. Interacts with a subset of F(1)F(0)-ATP synthase subunits of the F(1)-domain and the peripheral stalk.

It is found in the mitochondrion inner membrane. Component of the INA complex (INAC) that promotes the biogenesis of mitochondrial F(1)F(0)-ATP synthase. INAC facilitates the assembly of the peripheral stalk and promotes the assembly of the catalytic F(1)-domain with the membrane-embedded F(0)-domain. The chain is Inner membrane assembly complex subunit 17 from Saccharomyces cerevisiae (strain RM11-1a) (Baker's yeast).